Reading from the N-terminus, the 186-residue chain is ATP synthase subunit b (186 aa).

A helical transmembrane segment spans residues 25 to 45 (IVWSVVCVAIIAVVFYKYVIP).

This sequence belongs to the ATPase B chain family. F-type ATPases have 2 components, F(1) - the catalytic core - and F(0) - the membrane proton channel. F(1) has five subunits: alpha(3), beta(3), gamma(1), delta(1), epsilon(1). F(0) has three main subunits: a(1), b(2) and c(10-14). The alpha and beta chains form an alternating ring which encloses part of the gamma chain. F(1) is attached to F(0) by a central stalk formed by the gamma and epsilon chains, while a peripheral stalk is formed by the delta and b chains.

It localises to the cell membrane. F(1)F(0) ATP synthase produces ATP from ADP in the presence of a proton or sodium gradient. F-type ATPases consist of two structural domains, F(1) containing the extramembraneous catalytic core and F(0) containing the membrane proton channel, linked together by a central stalk and a peripheral stalk. During catalysis, ATP synthesis in the catalytic domain of F(1) is coupled via a rotary mechanism of the central stalk subunits to proton translocation. Functionally, component of the F(0) channel, it forms part of the peripheral stalk, linking F(1) to F(0). The chain is ATP synthase subunit b from Nocardia farcinica (strain IFM 10152).